A 152-amino-acid chain; its full sequence is Transcriptional regulator MraZ (152 aa).

2 SpoVT-AbrB domains span residues Ala5–Glu52 and Ala81–Met124.

The protein belongs to the MraZ family. Forms oligomers.

The protein localises to the cytoplasm. The protein resides in the nucleoid. In Psychromonas ingrahamii (strain DSM 17664 / CCUG 51855 / 37), this protein is Transcriptional regulator MraZ.